The primary structure comprises 341 residues: Phosphate acyltransferase (341 aa).

Belongs to the PlsX family. As to quaternary structure, homodimer. Probably interacts with PlsY.

It is found in the cytoplasm. It carries out the reaction a fatty acyl-[ACP] + phosphate = an acyl phosphate + holo-[ACP]. Its pathway is lipid metabolism; phospholipid metabolism. Its function is as follows. Catalyzes the reversible formation of acyl-phosphate (acyl-PO(4)) from acyl-[acyl-carrier-protein] (acyl-ACP). This enzyme utilizes acyl-ACP as fatty acyl donor, but not acyl-CoA. The polypeptide is Phosphate acyltransferase (Saccharophagus degradans (strain 2-40 / ATCC 43961 / DSM 17024)).